Here is a 212-residue protein sequence, read N- to C-terminus: External core antigen (212 aa).

Residues 1–19 form the signal peptide; sequence MQLFHLCLIISCSCPTVQA. The HBEAG stretch occupies residues 25–27; that stretch reads GWL. Positions 165–212 are disordered; it reads NAPILSTLPETTVVRRRGRSPRRRTPSPRRRRSQSPRRRRSQSRESQC. Positions 178-205 are enriched in basic residues; it reads VRRRGRSPRRRTPSPRRRRSQSPRRRRS. The stretch at 184 to 190 is one 1; half-length repeat; that stretch reads SPRRRTP. Residues 184–206 form a 3 X 8 AA repeats of S-P-R-R-R-R-S-Q region; sequence SPRRRTPSPRRRRSQSPRRRRSQ. Residues 184–212 constitute a propeptide that is removed on maturation; the sequence is SPRRRTPSPRRRRSQSPRRRRSQSRESQC. Tandem repeats lie at residues 191–198 and 199–206.

It belongs to the orthohepadnavirus precore antigen family. As to quaternary structure, homodimerizes. Phosphorylated. Post-translationally, cleaved by host furin.

Its subcellular location is the secreted. It localises to the host nucleus. Its function is as follows. May regulate immune response to the intracellular capsid in acting as a T-cell tolerogen, by having an immunoregulatory effect which prevents destruction of infected cells by cytotoxic T-cells. This immune regulation may predispose to chronicity during perinatal infections and prevent severe liver injury during adult infections. This Homo sapiens (Human) protein is External core antigen.